Reading from the N-terminus, the 319-residue chain is Formimidoylglutamase (319 aa).

The Mn(2+) site is built by histidine 131, aspartate 154, histidine 156, aspartate 158, cysteine 248, and aspartate 250.

The protein belongs to the arginase family. Mn(2+) is required as a cofactor.

The enzyme catalyses N-formimidoyl-L-glutamate + H2O = formamide + L-glutamate. It functions in the pathway amino-acid degradation; L-histidine degradation into L-glutamate; L-glutamate from N-formimidoyl-L-glutamate (hydrolase route): step 1/1. In terms of biological role, catalyzes the conversion of N-formimidoyl-L-glutamate to L-glutamate and formamide. In Legionella pneumophila (strain Paris), this protein is Formimidoylglutamase.